A 397-amino-acid polypeptide reads, in one-letter code: Enoyl-[acyl-carrier-protein] reductase [NADH] (397 aa).

Residues 48–53 (GASTGY), 74–75 (FE), 111–112 (DA), and 139–140 (LA) each bind NAD(+). Tyr-225 is a binding site for substrate. The active-site Proton donor is Tyr-235. Residues Lys-244 and 273–275 (VVT) contribute to the NAD(+) site.

This sequence belongs to the TER reductase family. As to quaternary structure, monomer.

The enzyme catalyses a 2,3-saturated acyl-[ACP] + NAD(+) = a (2E)-enoyl-[ACP] + NADH + H(+). It participates in lipid metabolism; fatty acid biosynthesis. Its function is as follows. Involved in the final reduction of the elongation cycle of fatty acid synthesis (FAS II). Catalyzes the reduction of a carbon-carbon double bond in an enoyl moiety that is covalently linked to an acyl carrier protein (ACP). The sequence is that of Enoyl-[acyl-carrier-protein] reductase [NADH] from Pseudoalteromonas translucida (strain TAC 125).